Reading from the N-terminus, the 188-residue chain is Segregation and condensation protein B (188 aa).

It belongs to the ScpB family. In terms of assembly, homodimer. Homodimerization may be required to stabilize the binding of ScpA to the Smc head domains. Component of a cohesin-like complex composed of ScpA, ScpB and the Smc homodimer, in which ScpA and ScpB bind to the head domain of Smc. The presence of the three proteins is required for the association of the complex with DNA.

The protein resides in the cytoplasm. Its function is as follows. Participates in chromosomal partition during cell division. May act via the formation of a condensin-like complex containing Smc and ScpA that pull DNA away from mid-cell into both cell halves. In Streptococcus gordonii (strain Challis / ATCC 35105 / BCRC 15272 / CH1 / DL1 / V288), this protein is Segregation and condensation protein B.